A 92-amino-acid polypeptide reads, in one-letter code: Neurophysin 2 (92 aa).

7 disulfides stabilise this stretch: Cys-10-Cys-54, Cys-13-Cys-27, Cys-21-Cys-44, Cys-28-Cys-34, Cys-61-Cys-73, Cys-67-Cys-85, and Cys-74-Cys-79.

Belongs to the vasopressin/oxytocin family. As to quaternary structure, there is an equilibrium between the monomeric and dimeric forms. On peptide binding the dimeric form predominates. In terms of processing, a shorter neurophysin molecule (1-90) also exists and is probably derived from the complete protein by proteolytic degradation (in vivo or after extraction).

The protein resides in the secreted. Functionally, neurophysin 2 specifically binds vasopressin. This is Neurophysin 2 (AVP) from Loxodonta africana (African elephant).